The primary structure comprises 224 residues: Ribosomal RNA small subunit methyltransferase G (224 aa).

S-adenosyl-L-methionine contacts are provided by residues glycine 89, phenylalanine 94, 140-141 (AE), and arginine 153.

Belongs to the methyltransferase superfamily. RNA methyltransferase RsmG family.

The protein localises to the cytoplasm. Specifically methylates the N7 position of a guanine in 16S rRNA. This is Ribosomal RNA small subunit methyltransferase G from Bacteroides fragilis (strain YCH46).